The sequence spans 180 residues: Ferric nitrobindin-like protein (180 aa).

The GXWXGXG signature appears at G21–G27.

Belongs to the nitrobindin family.

This is Ferric nitrobindin-like protein from Kineococcus radiotolerans (strain ATCC BAA-149 / DSM 14245 / SRS30216).